The sequence spans 435 residues: Adenylosuccinate synthetase (435 aa).

GTP-binding positions include 17-23 (GDEGKGK) and 47-49 (GHT). Asp-18 serves as the catalytic Proton acceptor. Residues Asp-18 and Gly-47 each coordinate Mg(2+). Residues 18–21 (DEGK), 45–48 (NAGH), Thr-138, Arg-152, Asn-232, Thr-247, and Arg-311 contribute to the IMP site. His-48 serves as the catalytic Proton donor. A substrate-binding site is contributed by 307–313 (VTTGRKR). Residues Arg-313, 339–341 (KLD), and 421–423 (GVG) each bind GTP.

This sequence belongs to the adenylosuccinate synthetase family. In terms of assembly, homodimer. It depends on Mg(2+) as a cofactor.

The protein localises to the cytoplasm. It carries out the reaction IMP + L-aspartate + GTP = N(6)-(1,2-dicarboxyethyl)-AMP + GDP + phosphate + 2 H(+). It participates in purine metabolism; AMP biosynthesis via de novo pathway; AMP from IMP: step 1/2. In terms of biological role, plays an important role in the de novo pathway and in the salvage pathway of purine nucleotide biosynthesis. Catalyzes the first committed step in the biosynthesis of AMP from IMP. In Caenorhabditis briggsae, this protein is Adenylosuccinate synthetase.